Reading from the N-terminus, the 287-residue chain is Myoblast determination protein 1 homolog B (287 aa).

The bHLH domain occupies 96 to 147 (DRRRAATMRERRRLSKVNDAFETLKRCTSTNPNQRLPKVDILRNAISYIDSL). Disordered regions lie at residues 161-202 (NMEH…FYTD) and 231-277 (QSPS…QLSH). The segment covering 168-188 (DSDASSPSSNCSDGMNSPPCS) has biased composition (low complexity). Residues 267–277 (SPGNSCTQLSH) show a composition bias toward polar residues.

As to quaternary structure, efficient DNA binding requires dimerization with another bHLH protein.

It localises to the nucleus. In terms of biological role, may act as a transcriptional activator that promotes transcription of muscle-specific target genes and plays a role in muscle differentiation. This is Myoblast determination protein 1 homolog B (myod1-b) from Xenopus laevis (African clawed frog).